The following is a 79-amino-acid chain: Small ribosomal subunit protein bS18 (79 aa).

The protein belongs to the bacterial ribosomal protein bS18 family. As to quaternary structure, part of the 30S ribosomal subunit. Forms a tight heterodimer with protein bS6.

Its function is as follows. Binds as a heterodimer with protein bS6 to the central domain of the 16S rRNA, where it helps stabilize the platform of the 30S subunit. This chain is Small ribosomal subunit protein bS18, found in Enterococcus faecalis (strain ATCC 700802 / V583).